Here is a 1557-residue protein sequence, read N- to C-terminus: Probable kinase PglW (1557 aa).

One can recognise an NERD domain in the interval 12 to 130; sequence SEFEHERRGL…VAEAVCFTDN (119 aa). Protein kinase domains are found at residues 195–490 and 530–816; these read ELER…LEVV and WEVR…KVFL. ATP is bound by residues 536–544 and Lys564; that span reads LGTGSTSRA. 2 disordered regions span residues 615–634 and 821–861; these read DERD…RRRE and TVPS…QRDR. A compositionally biased stretch (low complexity) spans 830–849; that stretch reads PAAPADGAAPAEGAAAGIAD.

The protein belongs to the protein kinase superfamily. Ser/Thr protein kinase family.

BREX systems (bacteriophage exclusion) provide immunity against bacteriophage. Part of a type 2 BREX system. Previously called the phage growth limitation (Pgl) system, it confers protection against bacteriophage phiC31. The bacteria allows one cycle of phage infection, but subsequent cycles are impaired, protecting the original bacterial colony. The system undergoes high rates (10(-3) to 10(-4)) of phase reversion, i.e. loss and regain of phiC31 resistance. When the pglW-pglX-pglY-pglZ genes are transformed into a susceptible S.lividans (strain 1326) they confer resistance to infection by phage phiC31 and phiBT1; all 4 genes are necessary. The proteins has kinase domains and might bind DNA. In terms of biological role, autophosphorylates when synthesized in vitro, cannot be expressed in E.coli. This Streptomyces coelicolor (strain ATCC BAA-471 / A3(2) / M145) protein is Probable kinase PglW.